The sequence spans 348 residues: 3-methyl-2-oxobutanoate dehydrogenase subunit beta (348 aa).

Thiamine diphosphate-binding positions include Glu51, Leu80–Glu82, Gln104, and Phe108–Pro111. Residues Phe105 to Phe108 and His151 each bind substrate. His151 (proton acceptor) is an active-site residue.

In terms of assembly, heteromer of E1 alpha (BkdA) and beta (BkdB) subunits. Part of the BCKADH complex, consisting of multiple copies of BkdA/BkdB (E1), BkdC (E2) and Lpd (E3). The cofactor is thiamine diphosphate.

It catalyses the reaction N(6)-[(R)-lipoyl]-L-lysyl-[protein] + 3-methyl-2-oxobutanoate + H(+) = N(6)-[(R)-S(8)-2-methylpropanoyldihydrolipoyl]-L-lysyl-[protein] + CO2. In terms of biological role, component of the branched-chain alpha-ketoacid dehydrogenase (BCKADH) complex, that catalyzes the overall conversion of branched-chain alpha-ketoacids to acyl-CoA and CO(2). The sequence is that of 3-methyl-2-oxobutanoate dehydrogenase subunit beta (bkdB) from Mycobacterium tuberculosis (strain CDC 1551 / Oshkosh).